The chain runs to 379 residues: Homoserine O-acetyltransferase (379 aa).

In terms of domain architecture, AB hydrolase-1 spans 52–356; the sequence is NVVVVLHALT…VYGHDGFLVE (305 aa). Residue S157 is the Nucleophile of the active site. Substrate is bound at residue R227. Catalysis depends on residues D320 and H350. D351 is a binding site for substrate.

It belongs to the AB hydrolase superfamily. MetX family. Homodimer.

The protein localises to the cytoplasm. It carries out the reaction L-homoserine + acetyl-CoA = O-acetyl-L-homoserine + CoA. It functions in the pathway amino-acid biosynthesis; L-methionine biosynthesis via de novo pathway; O-acetyl-L-homoserine from L-homoserine: step 1/1. Its function is as follows. Transfers an acetyl group from acetyl-CoA to L-homoserine, forming acetyl-L-homoserine. The protein is Homoserine O-acetyltransferase of Mycobacterium tuberculosis (strain CDC 1551 / Oshkosh).